Reading from the N-terminus, the 390-residue chain is Elongation factor Ts, mitochondrial (390 aa).

Belongs to the EF-Ts family.

Its subcellular location is the mitochondrion. Associates with the EF-Tu.GDP complex and induces the exchange of GDP to GTP. It remains bound to the aminoacyl-tRNA.EF-Tu.GTP complex up to the GTP hydrolysis stage on the ribosome. The polypeptide is Elongation factor Ts, mitochondrial (Plasmodium vivax (strain Salvador I)).